We begin with the raw amino-acid sequence, 481 residues long: ATP synthase subunit beta, chloroplastic (481 aa).

Position 162–169 (162–169) interacts with ATP; sequence GGAGVGKT.

This sequence belongs to the ATPase alpha/beta chains family. In terms of assembly, F-type ATPases have 2 components, F(1) - the catalytic core - and F(0) - the membrane proton channel. F(1) has five subunits: alpha(3), beta(3), gamma(1), delta(1), epsilon(1). F(0) has four main subunits: a(1), b(1), b'(1) and c(10-14). The alpha and beta chains form an alternating ring which encloses part of the gamma chain. F(1) is attached to F(0) by a central stalk formed by the gamma and epsilon chains, while a peripheral stalk is formed by the delta, b and b' chains.

It is found in the plastid. The protein resides in the chloroplast thylakoid membrane. It carries out the reaction ATP + H2O + 4 H(+)(in) = ADP + phosphate + 5 H(+)(out). F(1)F(0) ATP synthase produces ATP from ADP in the presence of a proton or sodium gradient. F-type ATPases consist of two structural domains, F(1) containing the extramembraneous catalytic core and F(0) containing the membrane proton channel, linked together by a central stalk and a peripheral stalk. During catalysis, ATP synthesis in the catalytic domain of F(1) is coupled via a rotary mechanism of the central stalk subunits to proton translocation. Its function is as follows. Produces ATP from ADP in the presence of a proton gradient across the membrane. The catalytic sites are hosted primarily by the beta subunits. The polypeptide is ATP synthase subunit beta, chloroplastic (Chlamydomonas reinhardtii (Chlamydomonas smithii)).